The chain runs to 471 residues: MSREMGELTQTRLQKIWIPHSSSSSLLQRRRGSSIPQFTNSPTMVIMVGLPARGKTYISTKLTRYLNWIGTPTKVFNLGQYRREAVSYRNYEFFRPDNMEAQLIRKQCALAALKDVHKYLSREEGHVAVFDATNTTRERRSLILQFAKEHGYKVFFIESICNDPDIIAENIKQVKLGSPDYIDCDQEKVLEDFLKRIECYEINYQPLDEELDSHLSYIKIFDVGTRYMVNRVQDHVQSRTAYYLMNIHVTPRSIYLCRHGESELNLRGRIGGDSGLSARGKQYAYALANFIRSQSISSLKVWTSHMKRTIQTAEALGVPYEQWKALNEIDAGVCEEMTYEEIQEHYPEEFALRDQDKYRYRYPKGESYEDLVQRLEPVIMELERQENVLVICHQAVMRCLLAYFLDKSSDELPYLKCPLHTVLKLTPVAYGCRVESIYLNVEAVNTHRDKPENVDITREPEEALDTVPAHY.

S2 is subject to N-acetylserine. Residues S2–T250 form a 6-phosphofructo-2-kinase region. S33 bears the Phosphoserine; by PKA mark. Position 49 to 57 (G49 to Y57) interacts with ATP. Residues R82 and R105 each coordinate beta-D-fructose 6-phosphate. D131 is a catalytic residue. Residues T133 and R139 each coordinate beta-D-fructose 6-phosphate. Phosphoserine is present on S141. C161 is a catalytic residue. An ATP-binding site is contributed by N170–K175. Residues K175, R196, and Y200 each coordinate beta-D-fructose 6-phosphate. The fructose-2,6-bisphosphatase stretch occupies residues P251–Y471. Beta-D-fructose 2,6-bisphosphate is bound at residue R258. H259 acts as the Tele-phosphohistidine intermediate in catalysis. Residues N265, G271, and R308 each contribute to the beta-D-fructose 2,6-bisphosphate site. E328 functions as the Proton donor/acceptor in the catalytic mechanism. Residues Y339, R353, K357, Y368, Q394, and R398 each contribute to the beta-D-fructose 2,6-bisphosphate site. ATP is bound at residue F350–R353. ATP is bound by residues Q394 to R398 and Y430.

It in the C-terminal section; belongs to the phosphoglycerate mutase family. As to quaternary structure, homodimer. As to expression, liver.

The catalysed reaction is beta-D-fructose 2,6-bisphosphate + H2O = beta-D-fructose 6-phosphate + phosphate. The enzyme catalyses beta-D-fructose 6-phosphate + ATP = beta-D-fructose 2,6-bisphosphate + ADP + H(+). With respect to regulation, phosphorylation at Ser-33 inhibits the kinase and activates the bisphosphatase. Functionally, synthesis and degradation of fructose 2,6-bisphosphate. This is 6-phosphofructo-2-kinase/fructose-2,6-bisphosphatase 1 from Mus musculus (Mouse).